The chain runs to 1094 residues: Probable arabinosyltransferase C (1094 aa).

The next 13 helical transmembrane spans lie at 28–50, 232–251, 264–286, 341–360, 373–392, 431–453, 466–488, 530–552, 565–582, 586–608, 620–642, 657–679, and 700–722; these read IARY…TPLL, AAMI…LHIL, PARW…WWHF, SIWM…WVIS, TSRA…WLPL, IGAL…LVAI, RFGV…IPIF, SIAR…AMSL, SRRI…MMFT, WTHH…AVAV, TVFA…GWWY, WRWS…AAWF, and LAGI…EVVS. Over residues 817 to 831 the composition is skewed to low complexity; sequence GSEPGTEGGTTAAPG. A disordered region spans residues 817 to 836; it reads GSEPGTEGGTTAAPGINGSR.

The protein belongs to the emb family.

The protein resides in the cell membrane. Its function is as follows. Arabinosyl transferase responsible for the polymerization of arabinose into the arabinan of arabinogalactan. In Mycobacterium bovis (strain ATCC BAA-935 / AF2122/97), this protein is Probable arabinosyltransferase C (embC).